Here is a 100-residue protein sequence, read N- to C-terminus: Mitochondrial import inner membrane translocase subunit Tim10 B (100 aa).

Residues 25 to 49 carry the Twin CX3C motif motif; it reads CFQRCVPSLHHRALDAEEEACLHSC. 2 disulfides stabilise this stretch: Cys25–Cys49 and Cys29–Cys45.

This sequence belongs to the small Tim family. As to quaternary structure, component of the TIM22 complex, which core is composed of TIMM22, associated with TIMM10 (TIMM10A and/or TIMM10B), TIMM9, AGK and TIMM29.

It is found in the mitochondrion inner membrane. Functionally, component of the TIM22 complex, a complex that mediates the import and insertion of multi-pass transmembrane proteins into the mitochondrial inner membrane. The TIM22 complex forms a twin-pore translocase that uses the membrane potential as the external driving force. In the TIM22 complex, it may act as a docking point for the soluble 70 kDa complex that guides the target proteins in transit through the aqueous mitochondrial intermembrane space. The chain is Mitochondrial import inner membrane translocase subunit Tim10 B (Timm10b) from Mus musculus (Mouse).